The sequence spans 570 residues: Vacuolar protein sorting-associated protein 45 (570 aa).

2 positions are modified to phosphoserine: Ser-307 and Ser-441.

It belongs to the STXBP/unc-18/SEC1 family. As to quaternary structure, interacts with STX6. Interacts with ZFYVE20. In terms of tissue distribution, ubiquitous. Expression was highest in testis, heart and brain, intermediate in kidney, spleen, prostate, ovary, small intestine and thymus and low in lung, skeletal muscle, placenta, colon, pancreas, peripheral blood leukocytes and liver.

The protein resides in the golgi apparatus membrane. The protein localises to the endosome membrane. Functionally, may play a role in vesicle-mediated protein trafficking from the Golgi stack through the trans-Golgi network. The chain is Vacuolar protein sorting-associated protein 45 (VPS45) from Homo sapiens (Human).